The chain runs to 154 residues: Snaclec salmorin subunit A (154 aa).

An N-terminal signal peptide occupies residues 1–23 (MGRFIFVSFGLLVVFLSLSGTGA). 3 disulfide bridges follow: Cys27-Cys38, Cys55-Cys152, and Cys127-Cys144. The 120-residue stretch at 34–153 (NNGHCYQAFN…CGQRNPFVCE (120 aa)) folds into the C-type lectin domain. Ca(2+)-binding residues include Ser66, Glu68, and Glu72. Glu153 contributes to the Ca(2+) binding site.

This sequence belongs to the snaclec family. In terms of assembly, heterodimer of subunits A and B; disulfide-linked. As to expression, expressed by the venom gland.

Its subcellular location is the secreted. In terms of biological role, inhibits thrombin-induced fibrinogen clotting and factor Xa-induced prothrombin activation. Binds to thrombin and prothrombin exosites. This is Snaclec salmorin subunit A from Gloydius brevicauda (Korean slamosa snake).